We begin with the raw amino-acid sequence, 303 residues long: Coenzyme PQQ synthesis protein B (303 aa).

It belongs to the PqqB family.

Its pathway is cofactor biosynthesis; pyrroloquinoline quinone biosynthesis. Its function is as follows. May be involved in the transport of PQQ or its precursor to the periplasm. In Pseudomonas fluorescens (strain SBW25), this protein is Coenzyme PQQ synthesis protein B.